A 282-amino-acid chain; its full sequence is Bis(5'-nucleosyl)-tetraphosphatase, symmetrical (282 aa).

The protein belongs to the Ap4A hydrolase family.

The enzyme catalyses P(1),P(4)-bis(5'-adenosyl) tetraphosphate + H2O = 2 ADP + 2 H(+). Hydrolyzes diadenosine 5',5'''-P1,P4-tetraphosphate to yield ADP. The protein is Bis(5'-nucleosyl)-tetraphosphatase, symmetrical of Sodalis glossinidius (strain morsitans).